The chain runs to 415 residues: Probable peptidoglycan glycosyltransferase FtsW (415 aa).

11 helical membrane passes run 31–51, 63–83, 97–117, 133–153, 162–182, 185–205, 206–226, 245–265, 285–305, 326–346, and 361–381; these read PILM…VTSA, FFFV…TVWL, LWIL…GIGH, IQVS…YIAT, ITGM…LLLQ, FGTT…ARAQ, WQMM…VVLS, FGHG…GVWG, FIFA…LIGL, IAGA…ALIN, and LPLM…LGFL.

Belongs to the SEDS family. FtsW subfamily.

The protein localises to the cell inner membrane. The catalysed reaction is [GlcNAc-(1-&gt;4)-Mur2Ac(oyl-L-Ala-gamma-D-Glu-L-Lys-D-Ala-D-Ala)](n)-di-trans,octa-cis-undecaprenyl diphosphate + beta-D-GlcNAc-(1-&gt;4)-Mur2Ac(oyl-L-Ala-gamma-D-Glu-L-Lys-D-Ala-D-Ala)-di-trans,octa-cis-undecaprenyl diphosphate = [GlcNAc-(1-&gt;4)-Mur2Ac(oyl-L-Ala-gamma-D-Glu-L-Lys-D-Ala-D-Ala)](n+1)-di-trans,octa-cis-undecaprenyl diphosphate + di-trans,octa-cis-undecaprenyl diphosphate + H(+). It participates in cell wall biogenesis; peptidoglycan biosynthesis. Peptidoglycan polymerase that is essential for cell division. In Halothiobacillus neapolitanus (strain ATCC 23641 / c2) (Thiobacillus neapolitanus), this protein is Probable peptidoglycan glycosyltransferase FtsW.